The chain runs to 370 residues: Notoamide biosynthesis cluster protein J (370 aa).

The N-terminal stretch at 1–22 (MRIMSIMLHLLATILLSSAVSA) is a signal peptide. N-linked (GlcNAc...) asparagine glycosylation is found at Asn159, Asn167, Asn192, Asn235, Asn282, Asn340, and Asn346.

Its function is as follows. Part of the gene cluster that mediates the biosynthesis of notoamide, a fungal indole alkaloid that belongs to a family of natural products containing a characteristic bicyclo[2.2.2]diazaoctane core. The first step of notoamide biosynthesis involves coupling of L-proline and L-tryptophan by the bimodular NRPS notE, to produce cyclo-L-tryptophan-L-proline called brevianamide F. The reverse prenyltransferase notF then acts as a deoxybrevianamide E synthase and converts brevianamide F to deoxybrevianamide E via reverse prenylation at C-2 of the indole ring leading to the bicyclo[2.2.2]diazaoctane core. Deoxybrevianamide E is further hydroxylated at C-6 of the indole ring, likely catalyzed by the cytochrome P450 monooxygenase notG, to yield 6-hydroxy-deoxybrevianamide E. 6-hydroxy-deoxybrevianamide E is a specific substrate of the prenyltransferase notC for normal prenylation at C-7 to produce 6-hydroxy-7-prenyl-deoxybrevianamide, also called notoamide S. As the proposed pivotal branching point in notoamide biosynthesis, notoamide S can be diverted to notoamide E through an oxidative pyran ring closure putatively catalyzed by either notH cytochrome P450 monooxygenase or the notD FAD-linked oxidoreductase. This step would be followed by an indole 2,3-epoxidation-initiated pinacol-like rearrangement catalyzed by the notB FAD-dependent monooxygenase leading to the formation of notoamide C and notoamide D. On the other hand notoamide S is converted to notoamide T by notH (or notD), a bifunctional oxidase that also functions as the intramolecular Diels-Alderase responsible for generation of (+)-notoamide T. To generate antipodal (-)-notoaminide T, notH' (or notD') in Aspergillus versicolor is expected to catalyze a Diels-Alder reaction leading to the opposite stereochemistry. The remaining oxidoreductase notD (or notH) likely catalyzes the oxidative pyran ring formation to yield (+)-stephacidin A. The FAD-dependent monooxygenase notI is highly similar to notB and is predicted to catalyze a similar conversion from (+)-stephacidin A to (-)-notoamide B via the 2,3-epoxidation of (+)-stephacidin A followed by a pinacol-type rearrangement. Finally, it remains unclear which enzyme could be responsible for the final hydroxylation steps leading to notoamide A and sclerotiamide. The function of notJ in the notoamide biosynthesis has not been determined yet. The protein is Notoamide biosynthesis cluster protein J of Aspergillus sp. (strain MF297-2).